The sequence spans 338 residues: Beta-ketoacyl-[acyl-carrier-protein] synthase III 2 (338 aa).

Residues cysteine 119 and histidine 255 contribute to the active site. An ACP-binding region spans residues 256 to 260 (QANIR). Asparagine 285 is a catalytic residue.

This sequence belongs to the thiolase-like superfamily. FabH family. In terms of assembly, homodimer.

It is found in the cytoplasm. It carries out the reaction malonyl-[ACP] + acetyl-CoA + H(+) = 3-oxobutanoyl-[ACP] + CO2 + CoA. It participates in lipid metabolism; fatty acid biosynthesis. In terms of biological role, catalyzes the condensation reaction of fatty acid synthesis by the addition to an acyl acceptor of two carbons from malonyl-ACP. Catalyzes the first condensation reaction which initiates fatty acid synthesis and may therefore play a role in governing the total rate of fatty acid production. Possesses both acetoacetyl-ACP synthase and acetyl transacylase activities. Its substrate specificity determines the biosynthesis of branched-chain and/or straight-chain of fatty acids. The chain is Beta-ketoacyl-[acyl-carrier-protein] synthase III 2 from Deinococcus radiodurans (strain ATCC 13939 / DSM 20539 / JCM 16871 / CCUG 27074 / LMG 4051 / NBRC 15346 / NCIMB 9279 / VKM B-1422 / R1).